Here is a 341-residue protein sequence, read N- to C-terminus: Anthranilate phosphoribosyltransferase (341 aa).

5-phospho-alpha-D-ribose 1-diphosphate is bound by residues G79, 82–83, T87, 89–92, 107–115, and S119; these read GD, NIST, and KHGGRSVSS. G79 is an anthranilate binding site. S91 contributes to the Mg(2+) binding site. Anthranilate is bound at residue R165. Positions 224 and 225 each coordinate Mg(2+).

This sequence belongs to the anthranilate phosphoribosyltransferase family. Homodimer. The cofactor is Mg(2+).

The catalysed reaction is N-(5-phospho-beta-D-ribosyl)anthranilate + diphosphate = 5-phospho-alpha-D-ribose 1-diphosphate + anthranilate. It participates in amino-acid biosynthesis; L-tryptophan biosynthesis; L-tryptophan from chorismate: step 2/5. In terms of biological role, catalyzes the transfer of the phosphoribosyl group of 5-phosphorylribose-1-pyrophosphate (PRPP) to anthranilate to yield N-(5'-phosphoribosyl)-anthranilate (PRA). This chain is Anthranilate phosphoribosyltransferase, found in Ruminiclostridium cellulolyticum (strain ATCC 35319 / DSM 5812 / JCM 6584 / H10) (Clostridium cellulolyticum).